The primary structure comprises 353 residues: Cyclin-dependent kinase-like 1 (353 aa).

One can recognise a Protein kinase domain in the interval 4–286 (YDRLSKLGEG…CSELMLHGIF (283 aa)). Residues 10-18 (LGEGSYGVV) and Lys-33 each bind ATP. Asp-126 acts as the Proton acceptor in catalysis. The interval 331 to 353 (GGNHGNNNNNGNGINRNFLPTIS) is disordered. Low complexity predominate over residues 335–347 (GNNNNNGNGINRN).

The protein belongs to the protein kinase superfamily. Ser/Thr protein kinase family. As to expression, specifically expressed in head and tail ciliated sensory neurons.

It is found in the cell projection. It localises to the cilium. It carries out the reaction L-seryl-[protein] + ATP = O-phospho-L-seryl-[protein] + ADP + H(+). The catalysed reaction is L-threonyl-[protein] + ATP = O-phospho-L-threonyl-[protein] + ADP + H(+). Its function is as follows. Modulates cilium assembly. The chain is Cyclin-dependent kinase-like 1 from Caenorhabditis elegans.